Here is a 506-residue protein sequence, read N- to C-terminus: MKEYQVYLERARSRQQDFLYPLIFREYIYGLAYSHNFNRSIFVENVGSDSKYSLLIVKRLITRMYQQNHLIISANDSNKNPFWGYNKNFYSQIISEGFAIVVEIPFFLEKSSSLEEAEIIKSYKNLRSIHSIFPFLEDKFTYLNYVSDIRIPYPIHLEILVQILRYWVKDAPFFHLLRLFLYNFSNWNSFITTKNSISTFSKSNPRLFLFLYNFYVCEYESIFLFLRNKSSHLRLKSFSVFFERIFFYAKREHLVEVFAKDFSYTLTFFKDPLIHYVRYQGKCILASKNSPFLMNKWKHYFIHLWQGFFYVWSQPRTIHINQLSEHSFQLLGYFLNVRVNRSVVRSQMLQNTFLIEIFSKKLDIIVPIIPLIRSLAKAKFCNVLGPLISKPVWADSSDFDIIDRFLXICRNLSHYYNGSSKKKSLYRIKYILRLSCIKTLACKHKSTVRAFLKRSGSEELLEEFFTEEEEILSLIFPRDSSTLHRLNRNRIWYLDILFSNDLVNDE.

The protein belongs to the intron maturase 2 family. MatK subfamily.

Its subcellular location is the plastid. It is found in the chloroplast. Functionally, usually encoded in the trnK tRNA gene intron. Probably assists in splicing its own and other chloroplast group II introns. The polypeptide is Maturase K (Medicago sativa (Alfalfa)).